We begin with the raw amino-acid sequence, 108 residues long: uncharacterized protein (108 aa).

Residues Phe-7 to Leu-27 form a helical membrane-spanning segment.

To N.crassa NCU05373.1.

The protein localises to the membrane. This is an uncharacterized protein from Schizosaccharomyces pombe (strain 972 / ATCC 24843) (Fission yeast).